A 493-amino-acid polypeptide reads, in one-letter code: MASPAPPEPAEQGSPALAAAPQAPPPPTRAPPEEPEGAAPPEEGAAAGAGRQVEEAAGGVAAVVTWLLGEPALWLGGRADELLSWKRPLHSLLAFVGANLVFWFLALTPWRVYHLISVMILTRVIMQIIKDMILSRTRGAQLWRSLSESWEVINSKPDERPGFSHCLAESWMNFSIFLQEMSVFKQQSPGKFCLLVCSVCTFFTILGSYIPGVILSYLLLLCAFLCPLFKCNDIGQKIYSKIKSCLLKLDFGIREYINQKKRERSEADKEKSHKDDSELDFSALCPKISLTTAAKELSVSDTDVSEVSWTDNGTFNLSEGYTPQTDTSDDLDRPSEEVFSRDLSDFPSLENGTGTNDEDELSLGLPTELKRKKEQLDGGPRRSTEKKSAAGLSLPLSSDQTLHLMSDLAGDVITAAVTAAVKDQLAGVRQALSQAAPSLGEDTDTEEGDDFELLDQSELDQIESELGLSQDQEAEAQQNKKSSGFLSNLLGGH.

The tract at residues Met-1 to Gln-52 is disordered. Over Met-1–Glu-55 the chain is Cytoplasmic. The span at Gly-37 to Gln-52 shows a compositional bias: low complexity. Residues Ala-56–Gly-76 traverse the membrane as a helical segment. Residues Gly-77–Arg-87 are Lumenal-facing. Residues Asp-80–Phe-229 form a reticulon homology domain region. The helical transmembrane segment at Pro-88 to Thr-108 threads the bilayer. The Cytoplasmic portion of the chain corresponds to Pro-109–His-114. The chain crosses the membrane as a helical span at residues Leu-115–Ser-135. Topologically, residues Arg-136 to Thr-204 are lumenal. Position 145 is a phosphoserine (Ser-145). At Ser-147 the chain carries Phosphoserine; by CAMK2B. A Phosphoserine modification is found at Ser-149. Residues Ile-205–Leu-225 traverse the membrane as a helical segment. The Cytoplasmic portion of the chain corresponds to Cys-226–His-493. The segment covering Phe-315–Asp-326 has biased composition (polar residues). 2 disordered regions span residues Phe-315–Leu-394 and Ala-435–His-493. A compositionally biased stretch (basic and acidic residues) spans Asp-330 to Ser-344. A Phosphothreonine modification is found at Thr-353. Basic and acidic residues predominate over residues Glu-368 to Ser-388. Residues Glu-441–Glu-463 are compositionally biased toward acidic residues. The LIR motif motif lies at Asp-449–Leu-454. Polar residues predominate over residues Gly-467–Leu-486.

It belongs to the RETREG family. As to quaternary structure, homooligomer; oligomerization is enhanced following endoplasmic reticulum stress and is mediated by the reticulon homology domain. Interacts with ATG8 family modifier proteins MAP1LC3A, MAP1LC3B, GABARAP, GABARAPL1 and GABARAPL2. Post-translationally, phosphorylation at Ser-147 by CAMK2B enhances oligomerization and membrane scission and reticulophagy activity.

It is found in the golgi apparatus. The protein localises to the cis-Golgi network membrane. Its subcellular location is the endoplasmic reticulum membrane. Endoplasmic reticulum (ER)-anchored autophagy regulator which mediates ER delivery into lysosomes through sequestration into autophagosomes. Promotes membrane remodeling and ER scission via its membrane bending capacity and targets the fragments into autophagosomes via interaction with ATG8 family proteins. Active under basal conditions. Required for collagen quality control in a LIR motif-dependent manner. Required for long-term survival of nociceptive and autonomic ganglion neurons. The chain is Reticulophagy regulator 1 (RETREG1) from Bos taurus (Bovine).